Here is a 481-residue protein sequence, read N- to C-terminus: MTVRVRIAPSPTGNLHIGTARTAVFNWLFAHHHGGTFVLRVEDTDLERSKPEYTENIKTGLQWLGLHWDEGPFFQTQRLDQYKAAIQTLLDQGLAYRCYCTPAELEAMREQQKANNQAPRYDNRHRNLTEAQRAEFEAQGRKPVIRFKIDDAQQIVWQDLIRGTMTWKGSDLGGDMVIARTPEGDESFGQPLYNLAVVVDDIDMQISHVIRGEDHIANTAKQILLYEALGAAVPQFAHTPLILNQEGRKLSKRDGVTSIDDFRQMGFLPQAIANYMSLLGWTPTDSTQEIFTLEEAAKEFSLERVNKAGAKFDWDKLDWINAQYLHQMPIPALTDLLIPYLQAAGYGDYLGDRPWLESLVALVAPSLTRLADVTQETRLLFGDSITLDEKATAQLQTEGVKVILQEILQNIQASTNFTPDEAKALINQATKAHGVKKGVVMKSMRAGLMGELQGPDLMQSWVLLHQKGWDIERLNQAIASI.

Positions 9-19 (PSPTGNLHIGT) match the 'HIGH' region motif. Residues 249–253 (KLSKR) carry the 'KMSKS' region motif. Lys252 is an ATP binding site.

Belongs to the class-I aminoacyl-tRNA synthetase family. Glutamate--tRNA ligase type 1 subfamily. In terms of assembly, monomer.

Its subcellular location is the cytoplasm. It carries out the reaction tRNA(Glu) + L-glutamate + ATP = L-glutamyl-tRNA(Glu) + AMP + diphosphate. Its function is as follows. Catalyzes the attachment of glutamate to tRNA(Glu) in a two-step reaction: glutamate is first activated by ATP to form Glu-AMP and then transferred to the acceptor end of tRNA(Glu). The polypeptide is Glutamate--tRNA ligase (Picosynechococcus sp. (strain ATCC 27264 / PCC 7002 / PR-6) (Agmenellum quadruplicatum)).